The primary structure comprises 82 residues: U-scoloptoxin(21)-Sm3a (82 aa).

An N-terminal signal peptide occupies residues 1 to 21 (MKIIALLLMVFLDFIIVNXAE).

Belongs to the scoloptoxin-21 family. In terms of tissue distribution, expressed by the venom gland.

It is found in the secreted. The sequence is that of U-scoloptoxin(21)-Sm3a from Scolopendra morsitans (Tanzanian blue ringleg centipede).